We begin with the raw amino-acid sequence, 201 residues long: Cytochrome c oxidase subunit 3 (201 aa).

The next 4 membrane-spanning stretches (helical) occupy residues 25–45, 65–85, 100–120, and 137–157; these read VLGL…LFAA, LFVP…IHYG, WYWI…YEYL, and VMTG…LGVI.

It belongs to the cytochrome c oxidase subunit 3 family.

Its subcellular location is the cell membrane. The enzyme catalyses 4 Fe(II)-[cytochrome c] + O2 + 8 H(+)(in) = 4 Fe(III)-[cytochrome c] + 2 H2O + 4 H(+)(out). The sequence is that of Cytochrome c oxidase subunit 3 (ctaE) from Thermostichus vulcanus (Synechococcus vulcanus).